A 213-amino-acid chain; its full sequence is Thymidylate kinase (213 aa).

Position 11–18 (11–18 (GGEGAGKT)) interacts with ATP.

Belongs to the thymidylate kinase family.

It catalyses the reaction dTMP + ATP = dTDP + ADP. Its function is as follows. Phosphorylation of dTMP to form dTDP in both de novo and salvage pathways of dTTP synthesis. The chain is Thymidylate kinase from Shouchella clausii (strain KSM-K16) (Alkalihalobacillus clausii).